Here is a 670-residue protein sequence, read N- to C-terminus: Carnitine O-acetyltransferase, mitochondrial (670 aa).

Catalysis depends on His378, which acts as the Proton acceptor. Residues Lys461 and 465 to 472 (KRHGMSPD) each bind CoA. Tyr494 serves as a coordination point for (R)-carnitine. CoA is bound at residue Ser498. Thr507 contacts (R)-carnitine. Position 597 (Gln597) interacts with CoA. A Microbody targeting signal motif is present at residues 668–670 (AKL).

Belongs to the carnitine/choline acetyltransferase family.

It is found in the mitochondrion inner membrane. The protein localises to the peroxisome. It catalyses the reaction (R)-carnitine + acetyl-CoA = O-acetyl-(R)-carnitine + CoA. In terms of biological role, carnitine acetylase is specific for short chain fatty acids. Carnitine acetylase seems to affect the flux through the pyruvate dehydrogenase complex. It may be involved as well in the transport of acetyl-CoA into mitochondria. This chain is Carnitine O-acetyltransferase, mitochondrial (CAT2), found in Saccharomyces cerevisiae (strain ATCC 204508 / S288c) (Baker's yeast).